Reading from the N-terminus, the 397-residue chain is Phosphopentomutase (397 aa).

Mn(2+) is bound by residues aspartate 10, aspartate 296, histidine 301, aspartate 337, histidine 338, and histidine 349.

This sequence belongs to the phosphopentomutase family. Mn(2+) is required as a cofactor.

The protein localises to the cytoplasm. It carries out the reaction 2-deoxy-alpha-D-ribose 1-phosphate = 2-deoxy-D-ribose 5-phosphate. It catalyses the reaction alpha-D-ribose 1-phosphate = D-ribose 5-phosphate. The protein operates within carbohydrate degradation; 2-deoxy-D-ribose 1-phosphate degradation; D-glyceraldehyde 3-phosphate and acetaldehyde from 2-deoxy-alpha-D-ribose 1-phosphate: step 1/2. Its function is as follows. Isomerase that catalyzes the conversion of deoxy-ribose 1-phosphate (dRib-1-P) and ribose 1-phosphate (Rib-1-P) to deoxy-ribose 5-phosphate (dRib-5-P) and ribose 5-phosphate (Rib-5-P), respectively. The sequence is that of Phosphopentomutase from Elusimicrobium minutum (strain Pei191).